A 335-amino-acid chain; its full sequence is 2-acylglycerol O-acyltransferase 2 (335 aa).

A run of 2 helical transmembrane segments spans residues 24 to 44 and 104 to 124; these read WAVSFLAMAQCCIALYILLLF and YIMGFHPHGVLVVGAFGNFCT. A glycan (N-linked (GlcNAc...) asparagine) is linked at N206.

Belongs to the diacylglycerol acyltransferase family.

The protein resides in the endoplasmic reticulum membrane. It localises to the cytoplasm. It is found in the perinuclear region. It catalyses the reaction a 2-acylglycerol + an acyl-CoA = a 1,2-diacylglycerol + CoA. The catalysed reaction is a 2-acylglycerol + an acyl-CoA = a 1,2-diacyl-sn-glycerol + CoA. The enzyme catalyses a 2-acylglycerol + an acyl-CoA = a 2,3-diacyl-sn-glycerol + CoA. It carries out the reaction a 1-acylglycerol + an acyl-CoA = a 1,2-diacylglycerol + CoA. It catalyses the reaction a 1-acylglycerol + an acyl-CoA = a 1,3-diacylglycerol + CoA. The catalysed reaction is 1-O-alkylglycerol + an acyl-CoA = 1-O-alkyl-3-acylglycerol + CoA. The enzyme catalyses an acyl-CoA + a 1,2-diacyl-sn-glycerol = a triacyl-sn-glycerol + CoA. It functions in the pathway glycerolipid metabolism; triacylglycerol biosynthesis. Functionally, involved in glycerolipid synthesis and lipid metabolism. Catalyzes the formation of diacylglycerol, the precursor of triacylglycerol, by transferring the acyl chain of a fatty acyl-CoA to a monoacylglycerol. Plays a central role in absorption of dietary fat in the small intestine by catalyzing the resynthesis of triacylglycerol in enterocytes. Has a preference toward monoacylglycerols containing unsaturated fatty acids in an order of C18:3 &gt; C18:2 &gt; C18:1 &gt; C18:0 at sn-2. Able to use 1-monoalkylglycerol (1-MAkG, 1-O-alkylglycerol) as an acyl acceptor for the synthesis of monoalkyl-monoacylglycerol (MAMAG, 1-O-alkyl-3-acylglycerol or 1-O-alkyl-2-acylglycerol) and subsequently, with lower efficiency, may add another acyl chain producing monoalkyl-diacylglycerol (MADAG, 1-O-alkyl-2,3-diacylglycerol). Possesses weak but significant activity with diacylglycerol as substrate, producing triacylglycerol (triacyl-sn-glycerol). The protein is 2-acylglycerol O-acyltransferase 2 (mogat2) of Xenopus tropicalis (Western clawed frog).